Here is a 347-residue protein sequence, read N- to C-terminus: Integrin beta-1-binding protein 2 (347 aa).

4 residues coordinate Zn(2+): Cys5, Cys10, Cys24, and His27. The CHORD 1 domain maps to 5–64 (CRNKGCGQHFDPNTNLPDSCCHHPGVPIFHDALKGWSCCRKRTVDFSEFLNIKGCTMGPH). The SH3-binding signature appears at 28–31 (PGVP). Positions 42, 43, 59, and 64 each coordinate Zn(2+). The SH3-binding motif lies at 70 to 78 (PEAPQPEGP). Positions 149 and 154 each coordinate Zn(2+). The 60-residue stretch at 149-208 (CQNPGCDAVYQGPESDATPCTYHPGAPRFHEGMKSWSCCGIQTLDFGAFLAQPGCRVGRH) folds into the CHORD 2 domain. An SH2-binding motif is present at residues 158 to 161 (YQGP). Positions 168 and 171 each coordinate Zn(2+). The short motif at 172 to 175 (PGAP) is the SH3-binding element. Zn(2+) is bound by residues Cys186, Cys187, Cys203, and His208. One can recognise a CS domain in the interval 215 to 304 (PASCRHDWHQ…ADPGSWAQLE (90 aa)). The SH2-binding motif lies at 234 to 237 (YGQI). Positions 319–347 (LEMDEEESDDSDDDLSWTEEEEEEEAMGE) are disordered. Over residues 320–347 (EMDEEESDDSDDDLSWTEEEEEEEAMGE) the composition is skewed to acidic residues.

Interacts with beta-1 integrin subunit. This interaction is regulated by divalent cations, and it occurs only in absence of calcium. As to expression, expressed in skeletal and cardiac muscles but not in other tissues.

Functionally, may play a role during maturation and/or organization of muscles cells. This is Integrin beta-1-binding protein 2 (ITGB1BP2) from Homo sapiens (Human).